The sequence spans 854 residues: Fibronectin-binding protein PlpA (854 aa).

The segment covering 1–24 has biased composition (low complexity); it reads MDNNQNNFNQPGQQGFDQYQQQSG. The disordered stretch occupies residues 1–33; that stretch reads MDNNQNNFNQPGQQGFDQYQQQSGALVSYGYDA. Positions 91–109 are fibronectin-binding; sequence QYNQQQNQGYEQQYDEYGN. 4 disordered regions span residues 247-327, 411-434, 743-766, and 835-854; these read YEQE…LEAP, SSNN…EDSN, TINP…QLPP, and IQPS…YNNR. The span at 258–267 shows a compositional bias: basic and acidic residues; it reads EPAHEQDLRE. Polar residues-rich tracts occupy residues 311–320 and 411–428; these read TVNQPDQTPI and SSNN…TSNE. Residues 384–622 are a coiled coil; that stretch reads NLEEIQKVKL…SSFQKALSEV (239 aa). The span at 746 to 764 shows a compositional bias: pro residues; that stretch reads PPQPQPQALPQPHPQPQQL.

It is found in the cell membrane. Functionally, binds immobilized fibronectin, specifically the gelatin/heparin-binding domain. This Mycoplasmoides gallisepticum (strain R(low / passage 15 / clone 2)) (Mycoplasma gallisepticum) protein is Fibronectin-binding protein PlpA (plpA).